Consider the following 255-residue polypeptide: tRNA (guanine-N(1)-)-methyltransferase (255 aa).

Residues Gly113 and 133 to 138 (IGDYVL) each bind S-adenosyl-L-methionine.

This sequence belongs to the RNA methyltransferase TrmD family. As to quaternary structure, homodimer.

It localises to the cytoplasm. It carries out the reaction guanosine(37) in tRNA + S-adenosyl-L-methionine = N(1)-methylguanosine(37) in tRNA + S-adenosyl-L-homocysteine + H(+). Functionally, specifically methylates guanosine-37 in various tRNAs. The polypeptide is tRNA (guanine-N(1)-)-methyltransferase (Escherichia coli O81 (strain ED1a)).